Here is a 363-residue protein sequence, read N- to C-terminus: Endopolygalacturonase A (363 aa).

The first 20 residues, Met-1–Ala-20, serve as a signal peptide directing secretion. A propeptide spanning residues Val-21 to Arg-28 is cleaved from the precursor. Cysteines 31 and 46 form a disulfide. 6 PbH1 repeats span residues Ser-158 to Ser-187, Ser-188 to Ser-209, Gly-210 to Ser-230, Val-239 to Thr-260, Val-268 to Gln-290, and Thr-302 to Gly-347. N-linked (GlcNAc...) asparagine glycosylation occurs at Asn-162. Asp-202 serves as the catalytic Proton donor. An intrachain disulfide couples Cys-204 to Cys-220. His-224 is an active-site residue. Disulfide bonds link Cys-330–Cys-335 and Cys-354–Cys-363.

This sequence belongs to the glycosyl hydrolase 28 family.

The protein resides in the secreted. It catalyses the reaction (1,4-alpha-D-galacturonosyl)n+m + H2O = (1,4-alpha-D-galacturonosyl)n + (1,4-alpha-D-galacturonosyl)m.. In terms of biological role, involved in maceration and soft-rotting of plant tissue. Hydrolyzes the 1,4-alpha glycosidic bonds of de-esterified pectate in the smooth region of the plant cell wall. The protein is Endopolygalacturonase A (pgaA) of Aspergillus flavus (strain ATCC MYA-384 / AF70).